The following is a 160-amino-acid chain: SsrA-binding protein (160 aa).

The disordered stretch occupies residues 133–160 (GKKLHDKRDTEKERDWKREQQRLLRDRG). The span at 138–160 (DKRDTEKERDWKREQQRLLRDRG) shows a compositional bias: basic and acidic residues.

This sequence belongs to the SmpB family.

It is found in the cytoplasm. Its function is as follows. Required for rescue of stalled ribosomes mediated by trans-translation. Binds to transfer-messenger RNA (tmRNA), required for stable association of tmRNA with ribosomes. tmRNA and SmpB together mimic tRNA shape, replacing the anticodon stem-loop with SmpB. tmRNA is encoded by the ssrA gene; the 2 termini fold to resemble tRNA(Ala) and it encodes a 'tag peptide', a short internal open reading frame. During trans-translation Ala-aminoacylated tmRNA acts like a tRNA, entering the A-site of stalled ribosomes, displacing the stalled mRNA. The ribosome then switches to translate the ORF on the tmRNA; the nascent peptide is terminated with the 'tag peptide' encoded by the tmRNA and targeted for degradation. The ribosome is freed to recommence translation, which seems to be the essential function of trans-translation. The protein is SsrA-binding protein of Rhizorhabdus wittichii (strain DSM 6014 / CCUG 31198 / JCM 15750 / NBRC 105917 / EY 4224 / RW1) (Sphingomonas wittichii).